A 207-amino-acid chain; its full sequence is MLNKLSRLLADAGISLTDHQKTLLVAYVDMLHKWNKAYNLTSVRDPNEMLVRHILDSIVVAPYLQGQRFIDVGTGPGLPGIPLAIVLPDAHFTLLDSLGKRVRFLRQVQHELKLENITPVQSRVEAYPSEPPFDGVISRAFASLNDMVSWCHQLPGEKGRFYALKGHLPGDEIASLPDDFSVESVEKLRVPQLEGERHLVIIKSNKV.

Residues Gly-73, Leu-78, 124-125 (VE), and Arg-139 each bind S-adenosyl-L-methionine.

Belongs to the methyltransferase superfamily. RNA methyltransferase RsmG family.

The protein localises to the cytoplasm. It catalyses the reaction guanosine(527) in 16S rRNA + S-adenosyl-L-methionine = N(7)-methylguanosine(527) in 16S rRNA + S-adenosyl-L-homocysteine. Its function is as follows. Specifically methylates the N7 position of guanine in position 527 of 16S rRNA. The chain is Ribosomal RNA small subunit methyltransferase G from Salmonella schwarzengrund (strain CVM19633).